The following is a 170-amino-acid chain: F1 capsule antigen (170 aa).

Residues 1–21 form the signal peptide; that stretch reads MKKISSVIAIALFGTIATANA. The interval 100–150 is contains potential antigenic determinants that may stimulate T-cells; it reads GNNHQFTTKVIGKDSRDFDISPKVNGENLVGDDVVLATGSQDFFVRSIGSK.

The protein localises to the secreted. It localises to the capsule. The sequence is that of F1 capsule antigen (caf1) from Yersinia pestis.